Consider the following 326-residue polypeptide: uncharacterized protein (326 aa).

127–134 provides a ligand contact to ATP; the sequence is GATGSGKS.

The protein belongs to the GSP E family.

This is an uncharacterized protein from Escherichia coli (strain K12).